We begin with the raw amino-acid sequence, 557 residues long: Dihydroxy-acid dehydratase (557 aa).

Asp78 contributes to the Mg(2+) binding site. Residue Cys119 participates in [2Fe-2S] cluster binding. Asp120 and Lys121 together coordinate Mg(2+). Lys121 bears the N6-carboxylysine mark. Cys192 is a binding site for [2Fe-2S] cluster. Residue Glu442 participates in Mg(2+) binding. Ser468 serves as the catalytic Proton acceptor.

It belongs to the IlvD/Edd family. As to quaternary structure, homodimer. Requires [2Fe-2S] cluster as cofactor. Mg(2+) is required as a cofactor.

It carries out the reaction (2R)-2,3-dihydroxy-3-methylbutanoate = 3-methyl-2-oxobutanoate + H2O. It catalyses the reaction (2R,3R)-2,3-dihydroxy-3-methylpentanoate = (S)-3-methyl-2-oxopentanoate + H2O. It participates in amino-acid biosynthesis; L-isoleucine biosynthesis; L-isoleucine from 2-oxobutanoate: step 3/4. The protein operates within amino-acid biosynthesis; L-valine biosynthesis; L-valine from pyruvate: step 3/4. Its function is as follows. Functions in the biosynthesis of branched-chain amino acids. Catalyzes the dehydration of (2R,3R)-2,3-dihydroxy-3-methylpentanoate (2,3-dihydroxy-3-methylvalerate) into 2-oxo-3-methylpentanoate (2-oxo-3-methylvalerate) and of (2R)-2,3-dihydroxy-3-methylbutanoate (2,3-dihydroxyisovalerate) into 2-oxo-3-methylbutanoate (2-oxoisovalerate), the penultimate precursor to L-isoleucine and L-valine, respectively. The protein is Dihydroxy-acid dehydratase of Bacillus cereus (strain ATCC 10987 / NRS 248).